A 1588-amino-acid chain; its full sequence is Paternally-expressed gene 3 protein (1588 aa).

Residues 46–128 (HQRFRNLIYV…TLLENYKEMY (83 aa)) enclose the SCAN box domain. 3 disordered regions span residues 128 to 230 (YQPE…ESYQ), 266 to 306 (DGHS…RRGI), and 319 to 349 (KFIK…MSDD). Acidic residues predominate over residues 129-142 (QPEDDNNSDVTSDD). Composition is skewed to basic and acidic residues over residues 143–152 (DMTRNRRESS), 161–182 (SGDR…DRWS), 206–225 (FEMD…RSQD), and 295–306 (PEAKKSTHRRGI). 3 C2H2-type zinc fingers span residues 454–476 (YVCD…QIMH), 507–529 (FECK…RKIH), and 565–587 (YECR…QKIH). Residues 588–607 (FGDDKDNEREHERERERGET) are compositionally biased toward basic and acidic residues. Residues 588–610 (FGDDKDNEREHERERERGETFRP) form a disordered region. The C2H2-type 4 zinc finger occupies 627-649 (YECKVCGETFLHSSSLKEHQKIH). The tract at residues 838 to 930 (LVASKPPRSH…EFSVPSSNVR (93 aa)) is disordered. The span at 868-881 (LNDKRQKIPARENP) shows a compositional bias: basic and acidic residues. The C2H2-type 5 zinc finger occupies 969–991 (YECQECGECFAHSSDLTEHQKIH). Residues 1056-1104 (EKSHGEESQGENTDGEETHSEETHGQETIEDPVIQGSDMEDPQKDDPDD) form a disordered region. The segment covering 1071-1082 (EETHSEETHGQE) has biased composition (basic and acidic residues). C2H2-type zinc fingers lie at residues 1107–1129 (YECE…QKVH), 1163–1185 (YECP…QRIH), 1225–1247 (IRCL…MRLH), 1282–1304 (FECA…VTVH), and 1332–1354 (YECK…KELH). A disordered region spans residues 1393–1495 (EAAEPEVEAX…GIEDPEEGED (103 aa)). Residues 1395 to 1415 (AEPEVEAXEPEVEAAEPEVEA) show a composition bias toward acidic residues. 7 consecutive repeat copies span residues 1397–1403 (PEVEAXE), 1404–1410 (PEVEAAE), 1411–1417 (PEVEAAE), 1418–1422 (PNGEA), 1425–1429 (PDGEA), 1432–1436 (PIGEA), and 1439–1443 (PNGEA). The segment at 1397–1417 (PEVEAXEPEVEAAEPEVEAAE) is 3 X 7 AA repeat of P-E-V-E-A-A-E. Residues 1418–1443 (PNGEAEGPDGEAAEPIGEAGQPNGEA) form a 4 X 5 AA repeat of P-X-G-E-A region. Composition is skewed to acidic residues over residues 1449–1466 (DADE…ERAE) and 1475–1495 (PEGD…EGED). C2H2-type zinc fingers lie at residues 1505 to 1527 (YDCH…LKTH) and 1564 to 1586 (FKCD…QNTH).

The protein belongs to the krueppel C2H2-type zinc-finger protein family. As to quaternary structure, homodimer. Interacts with SIAH1A and SIAH2. Interacts with TRAF2.

It is found in the nucleus. Its subcellular location is the cytoplasm. Its function is as follows. Induces apoptosis in cooperation with SIAH1A. Acts as a mediator between p53/TP53 and BAX in a neuronal death pathway that is activated by DNA damage. Acts synergistically with TRAF2 and inhibits TNF induced apoptosis through activation of NF-kappa-B. The chain is Paternally-expressed gene 3 protein (PEG3) from Pan paniscus (Pygmy chimpanzee).